Reading from the N-terminus, the 200-residue chain is Pyridoxal 5'-phosphate synthase subunit PdxT (200 aa).

52–54 contributes to the L-glutamine binding site; sequence GES. Cysteine 84 serves as the catalytic Nucleophile. Residues arginine 116 and 145–146 contribute to the L-glutamine site; that span reads IR. Catalysis depends on charge relay system residues histidine 181 and glutamate 183.

Belongs to the glutaminase PdxT/SNO family. As to quaternary structure, in the presence of PdxS, forms a dodecamer of heterodimers. Only shows activity in the heterodimer.

It catalyses the reaction aldehydo-D-ribose 5-phosphate + D-glyceraldehyde 3-phosphate + L-glutamine = pyridoxal 5'-phosphate + L-glutamate + phosphate + 3 H2O + H(+). The catalysed reaction is L-glutamine + H2O = L-glutamate + NH4(+). It participates in cofactor biosynthesis; pyridoxal 5'-phosphate biosynthesis. In terms of biological role, catalyzes the hydrolysis of glutamine to glutamate and ammonia as part of the biosynthesis of pyridoxal 5'-phosphate. The resulting ammonia molecule is channeled to the active site of PdxS. The sequence is that of Pyridoxal 5'-phosphate synthase subunit PdxT from Saccharolobus islandicus (strain L.S.2.15 / Lassen #1) (Sulfolobus islandicus).